A 710-amino-acid chain; its full sequence is Polyribonucleotide nucleotidyltransferase (710 aa).

Residues aspartate 491 and aspartate 497 each coordinate Mg(2+). The 60-residue stretch at proline 559–isoleucine 618 folds into the KH domain. An S1 motif domain is found at glycine 628–lysine 696.

It belongs to the polyribonucleotide nucleotidyltransferase family. Mg(2+) serves as cofactor.

Its subcellular location is the cytoplasm. The catalysed reaction is RNA(n+1) + phosphate = RNA(n) + a ribonucleoside 5'-diphosphate. Involved in mRNA degradation. Catalyzes the phosphorolysis of single-stranded polyribonucleotides processively in the 3'- to 5'-direction. The polypeptide is Polyribonucleotide nucleotidyltransferase (Herminiimonas arsenicoxydans).